Consider the following 434-residue polypeptide: Histidinol dehydrogenase (434 aa).

Residues Tyr-130, Gln-191, and Asn-214 each contribute to the NAD(+) site. Residues Ser-237, Gln-259, and His-262 each contribute to the substrate site. Residues Gln-259 and His-262 each contribute to the Zn(2+) site. Residues Glu-327 and His-328 each act as proton acceptor in the active site. Positions 328, 361, 415, and 420 each coordinate substrate. Asp-361 contacts Zn(2+). Residue His-420 participates in Zn(2+) binding.

This sequence belongs to the histidinol dehydrogenase family. Requires Zn(2+) as cofactor.

The enzyme catalyses L-histidinol + 2 NAD(+) + H2O = L-histidine + 2 NADH + 3 H(+). It functions in the pathway amino-acid biosynthesis; L-histidine biosynthesis; L-histidine from 5-phospho-alpha-D-ribose 1-diphosphate: step 9/9. Catalyzes the sequential NAD-dependent oxidations of L-histidinol to L-histidinaldehyde and then to L-histidine. The chain is Histidinol dehydrogenase from Cereibacter sphaeroides (strain ATCC 17023 / DSM 158 / JCM 6121 / CCUG 31486 / LMG 2827 / NBRC 12203 / NCIMB 8253 / ATH 2.4.1.) (Rhodobacter sphaeroides).